A 136-amino-acid polypeptide reads, in one-letter code: Immunoglobulin J chain (136 aa).

Disulfide bonds link C12–C100, C71–C91, and C108–C133. N-linked (GlcNAc...) (complex) asparagine glycosylation is present at N48.

As to quaternary structure, part of the secretory IgA (sIgA) complex that consists of two, four or five IgA monomers, and two additional non-Ig polypeptides, namely the JCHAIN and the secretory component (the proteolytic product of PIGR). Part of the secretory IgM (sIgM) complex that consist of five IgM monomers, and two additional non-Ig polypeptides, namely the JCHAIN and the secretory component (the proteolytic product of PIGR). JCHAIN-containing IgM interacts (via CH4 domain) with FCRM (via Ig-like domain).

It localises to the secreted. Its function is as follows. Serves to link two monomer units of either IgM or IgA. In the case of IgM, the J chain-joined dimer is a nucleating unit for the IgM pentamer, and in the case of IgA it induces dimers and/or larger polymers. It also helps to bind these immunoglobulins to secretory component. The polypeptide is Immunoglobulin J chain (Oryctolagus cuniculus (Rabbit)).